Here is a 278-residue protein sequence, read N- to C-terminus: S-formylglutathione hydrolase YeiG (278 aa).

Catalysis depends on charge relay system residues S145, D223, and H256.

The protein belongs to the esterase D family.

It catalyses the reaction S-formylglutathione + H2O = formate + glutathione + H(+). Its function is as follows. Serine hydrolase involved in the detoxification of formaldehyde. Hydrolyzes S-formylglutathione to glutathione and formate. The chain is S-formylglutathione hydrolase YeiG (yeiG) from Escherichia coli (strain UTI89 / UPEC).